We begin with the raw amino-acid sequence, 414 residues long: 2,3-diketo-5-methylthiopentyl-1-phosphate enolase (414 aa).

Lys-99 functions as the Proton acceptor in the catalytic mechanism. Substrate-binding positions include Lys-148, 174–177 (KDDE), His-265, Gly-338, and 360–361 (GG). Mg(2+) is bound by residues Lys-174, Asp-176, and Glu-177. Lys-174 bears the N6-carboxylysine mark.

Belongs to the RuBisCO large chain family. Type IV subfamily. Homodimer. Requires Mg(2+) as cofactor.

The catalysed reaction is 5-methylsulfanyl-2,3-dioxopentyl phosphate = 2-hydroxy-5-methylsulfanyl-3-oxopent-1-enyl phosphate. The protein operates within amino-acid biosynthesis; L-methionine biosynthesis via salvage pathway; L-methionine from S-methyl-5-thio-alpha-D-ribose 1-phosphate: step 3/6. Functionally, catalyzes the enolization of 2,3-diketo-5-methylthiopentyl-1-phosphate (DK-MTP-1-P) into 2-hydroxy-3-keto-5-methylthiopentenyl-1-phosphate (HK-MTPenyl-1-P). This is 2,3-diketo-5-methylthiopentyl-1-phosphate enolase from Bacillus cereus (strain Q1).